Consider the following 404-residue polypeptide: MANASGFFTHPSIPNLRSRIHVPVRVSGSGFCVSNRFSKRVLCSSVSSVDKDASSSPSQYQRPRLVPSGCKLIGCGSAVPSLLISNDDLAKIVDTNDEWIATRTGIRNRRVVSGKDSLVGLAVEAATKALEMAEVVPEDIDLVLMCTSTPDDLFGAAPQIQKALGCTKNPLAYDITAACSGFVLGLVSAACHIRGGGFKNVLVIGADSLSRFVDWTDRGTCILFGDAAGAVVVQACDIEDDGLFSFDVHSDGDGRRHLNASVKESQNDGESSSNGSVFGDFPPKQSSYSCIQMNGKEVFRFAVKCVPQSIESALQKAGLPASAIDWLLLHQANQRIIDSVATRLHFPPERVISNLANYGNTSAASIPLALDEAVRSGKVKPGHTIATSGFGAGLTWGSAIMRWR.

The N-terminal 43 residues, 1–43 (MANASGFFTHPSIPNLRSRIHVPVRVSGSGFCVSNRFSKRVLC), are a transit peptide targeting the chloroplast. Residues C179, H330, and N360 contribute to the active site.

The protein belongs to the thiolase-like superfamily. FabH family.

Its subcellular location is the plastid. It localises to the chloroplast. The catalysed reaction is malonyl-[ACP] + acetyl-CoA + H(+) = 3-oxobutanoyl-[ACP] + CO2 + CoA. It participates in lipid metabolism; fatty acid biosynthesis. Catalyzes the condensation reaction of fatty acid synthesis by the addition to an acyl acceptor of two carbons from malonyl-ACP. KAS III catalyzes the first condensation reaction which initiates fatty acid synthesis and may therefore play a role in governing the total rate of fatty acid production. Possesses both acetoacetyl-ACP synthase and acetyl transacylase activities. The protein is Beta-ketoacyl-[acyl-carrier-protein] synthase III, chloroplastic of Arabidopsis thaliana (Mouse-ear cress).